The chain runs to 67 residues: Small ribosomal subunit protein bS21 (67 aa).

This sequence belongs to the bacterial ribosomal protein bS21 family.

The sequence is that of Small ribosomal subunit protein bS21 from Nitratidesulfovibrio vulgaris (strain DSM 19637 / Miyazaki F) (Desulfovibrio vulgaris).